Reading from the N-terminus, the 157-residue chain is S-ribosylhomocysteine lyase (157 aa).

3 residues coordinate Fe cation: H53, H57, and C124.

It belongs to the LuxS family. As to quaternary structure, homodimer. The cofactor is Fe cation.

The catalysed reaction is S-(5-deoxy-D-ribos-5-yl)-L-homocysteine = (S)-4,5-dihydroxypentane-2,3-dione + L-homocysteine. Involved in the synthesis of autoinducer 2 (AI-2) which is secreted by bacteria and is used to communicate both the cell density and the metabolic potential of the environment. The regulation of gene expression in response to changes in cell density is called quorum sensing. Catalyzes the transformation of S-ribosylhomocysteine (RHC) to homocysteine (HC) and 4,5-dihydroxy-2,3-pentadione (DPD). The sequence is that of S-ribosylhomocysteine lyase from Borreliella afzelii (strain PKo) (Borrelia afzelii).